A 509-amino-acid chain; its full sequence is Probable cytochrome P450 4ac1 (509 aa).

2 residues coordinate heme: Glu-317 and Cys-454.

This sequence belongs to the cytochrome P450 family. Heme serves as cofactor.

Its subcellular location is the endoplasmic reticulum membrane. It is found in the microsome membrane. Its function is as follows. May be involved in the metabolism of insect hormones and in the breakdown of synthetic insecticides. The protein is Probable cytochrome P450 4ac1 (Cyp4ac1) of Drosophila melanogaster (Fruit fly).